The sequence spans 885 residues: Probable LRR receptor-like serine/threonine-protein kinase At1g51820 (885 aa).

The N-terminal stretch at 1-20 is a signal peptide; sequence MERHFVFIATYLLIFHLVQA. The Extracellular segment spans residues 21-509; that stretch reads QNQTGFISVD…GHKKKSVIVP (489 aa). Residues Asn22, Asn93, Asn135, Asn194, Asn228, Asn250, Asn254, Asn281, Asn287, Asn424, Asn437, Asn456, and Asn461 are each glycosylated (N-linked (GlcNAc...) asparagine). 3 LRR repeats span residues 403–424, 427–447, and 451–473; these read IITS…AIKN, HLQI…EFLA, and SLLV…LLQK. A helical membrane pass occupies residues 510–530; it reads VVASIASIAVLIGALVLFLIL. The Cytoplasmic portion of the chain corresponds to 531–885; it reads RKKRSPKVEG…FGTEVSPNAR (355 aa). The Protein kinase domain maps to 578–851; it reads NNFQRILGKG…QVVIELNECL (274 aa). Residues 584–592 and Lys606 contribute to the ATP site; that span reads LGKGGFGMV. Phosphotyrosine is present on Tyr651. Residue Asp703 is the Proton acceptor of the active site. Phosphoserine is present on Ser737. Residues Thr738 and Thr743 each carry the phosphothreonine modification. Position 751 is a phosphotyrosine (Tyr751).

Belongs to the protein kinase superfamily. Ser/Thr protein kinase family.

It is found in the membrane. It carries out the reaction L-seryl-[protein] + ATP = O-phospho-L-seryl-[protein] + ADP + H(+). It catalyses the reaction L-threonyl-[protein] + ATP = O-phospho-L-threonyl-[protein] + ADP + H(+). The polypeptide is Probable LRR receptor-like serine/threonine-protein kinase At1g51820 (Arabidopsis thaliana (Mouse-ear cress)).